An 82-amino-acid polypeptide reads, in one-letter code: Small ribosomal subunit protein uS12 (82 aa).

D59 is modified (3-methylthioaspartic acid).

It belongs to the universal ribosomal protein uS12 family. As to quaternary structure, part of the 30S ribosomal subunit. Contacts proteins S8 and S17. May interact with IF1 in the 30S initiation complex.

With S4 and S5 plays an important role in translational accuracy. In terms of biological role, interacts with and stabilizes bases of the 16S rRNA that are involved in tRNA selection in the A site and with the mRNA backbone. Located at the interface of the 30S and 50S subunits, it traverses the body of the 30S subunit contacting proteins on the other side and probably holding the rRNA structure together. The combined cluster of proteins S8, S12 and S17 appears to hold together the shoulder and platform of the 30S subunit. The chain is Small ribosomal subunit protein uS12 (rpsL) from Actinobacillus pleuropneumoniae (Haemophilus pleuropneumoniae).